The sequence spans 346 residues: Phosphoribosylformylglycinamidine cyclo-ligase (346 aa).

It belongs to the AIR synthase family.

Its subcellular location is the cytoplasm. The catalysed reaction is 2-formamido-N(1)-(5-O-phospho-beta-D-ribosyl)acetamidine + ATP = 5-amino-1-(5-phospho-beta-D-ribosyl)imidazole + ADP + phosphate + H(+). Its pathway is purine metabolism; IMP biosynthesis via de novo pathway; 5-amino-1-(5-phospho-D-ribosyl)imidazole from N(2)-formyl-N(1)-(5-phospho-D-ribosyl)glycinamide: step 2/2. The chain is Phosphoribosylformylglycinamidine cyclo-ligase from Vibrio parahaemolyticus serotype O3:K6 (strain RIMD 2210633).